The primary structure comprises 131 residues: Large ribosomal subunit protein bL19 (131 aa).

The span at 111-124 shows a compositional bias: basic and acidic residues; that stretch reads RIAERAERGSEKGK. Residues 111–131 are disordered; that stretch reads RIAERAERGSEKGKTTPAAAE.

Belongs to the bacterial ribosomal protein bL19 family.

Functionally, this protein is located at the 30S-50S ribosomal subunit interface and may play a role in the structure and function of the aminoacyl-tRNA binding site. This Methylobacterium nodulans (strain LMG 21967 / CNCM I-2342 / ORS 2060) protein is Large ribosomal subunit protein bL19.